The sequence spans 391 residues: 1-acyl-sn-glycerol-3-phosphate acyltransferase 2 (391 aa).

Residues 3–23 (MAAAAVIVPLGILFFISGLVV) traverse the membrane as a helical segment. The short motif at 92–97 (HRSDID) is the HXXXXD motif element. A run of 2 helical transmembrane segments spans residues 306–326 (LAVV…FLHW) and 334–354 (KGIA…QILI). The interval 358–391 (QSERSTPAKVAPAKPKDKHQSGSSSQTEVEEKQK) is disordered.

It belongs to the 1-acyl-sn-glycerol-3-phosphate acyltransferase family.

It is found in the endoplasmic reticulum membrane. The enzyme catalyses a 1-acyl-sn-glycero-3-phosphate + an acyl-CoA = a 1,2-diacyl-sn-glycero-3-phosphate + CoA. It functions in the pathway phospholipid metabolism; CDP-diacylglycerol biosynthesis; CDP-diacylglycerol from sn-glycerol 3-phosphate: step 2/3. Converts lysophosphatidic acid (LPA) into phosphatidic acid by incorporating acyl moiety at the 2 position. The polypeptide is 1-acyl-sn-glycerol-3-phosphate acyltransferase 2 (LPAT2) (Brassica oleracea (Wild cabbage)).